The following is a 364-amino-acid chain: Caffeic acid 3-O-methyltransferase 2 (364 aa).

129-135 contributes to the substrate binding site; sequence MNQDKVL. The segment at 161-179 is substrate binding; it reads AFEYHGTDPRFNKVFNKGM. Positions 207, 230, 250, 251, and 264 each coordinate S-adenosyl-L-methionine. Residue His-268 is the Proton acceptor of the active site.

This sequence belongs to the class I-like SAM-binding methyltransferase superfamily. Cation-independent O-methyltransferase family. COMT subfamily. Homodimer.

The catalysed reaction is (E)-caffeate + S-adenosyl-L-methionine = (E)-ferulate + S-adenosyl-L-homocysteine + H(+). Its pathway is aromatic compound metabolism; phenylpropanoid biosynthesis. In terms of biological role, catalyzes the conversion of caffeic acid to ferulic acid and of 5-hydroxyferulic acid to sinapic acid. The resulting products may subsequently be converted to the corresponding alcohols that are incorporated into lignins. The sequence is that of Caffeic acid 3-O-methyltransferase 2 (OMT2) from Populus tremuloides (Quaking aspen).